Here is a 540-residue protein sequence, read N- to C-terminus: V-set and immunoglobulin domain-containing protein 10 (540 aa).

A signal peptide spans 1 to 30; sequence MAAGGSAPEPRVLVCLGALLAGWVAVGLEA. Ig-like C2-type domains are found at residues 31–119, 123–215, 223–309, and 311–404; these read VVIG…WLQV, PYQI…RKVT, PPPS…VQIR, and PSLL…IWLS. Residues 31–413 lie on the Extracellular side of the membrane; that stretch reads VVIGEVHENV…SVKEPLNIGG (383 aa). N-linked (GlcNAc...) asparagine glycans are attached at residues asparagine 39, asparagine 46, asparagine 70, asparagine 108, asparagine 138, asparagine 171, asparagine 180, and asparagine 198. A disulfide bond links cysteine 44 and cysteine 103. 2 cysteine pairs are disulfide-bonded: cysteine 153–cysteine 201 and cysteine 245–cysteine 290. Residue asparagine 326 is glycosylated (N-linked (GlcNAc...) asparagine). Cysteine 331 and cysteine 388 are joined by a disulfide. A helical transmembrane segment spans residues 414 to 434; the sequence is IVGTIVSLLLLGLAIISGLLL. Residues 435–540 lie on the Cytoplasmic side of the membrane; that stretch reads HYSPVFCWKV…DIVQEEDRPV (106 aa). Residues 461–477 are compositionally biased toward acidic residues; it reads DSEEEEEEEEEEEEDAA. Disordered regions lie at residues 461 to 500 and 513 to 540; these read DSEE…QDHI and QMGN…DRPV. Residues 482 to 500 are compositionally biased toward basic and acidic residues; it reads EGAREREELPKEIPKQDHI. Over residues 521-534 the composition is skewed to acidic residues; it reads LQDDSSEEQSDIVQ.

Its subcellular location is the membrane. The protein is V-set and immunoglobulin domain-containing protein 10 (VSIG10) of Homo sapiens (Human).